The following is a 324-amino-acid chain: Putative transcription factor sel-7 (324 aa).

Residues 67-85 (SPPQTVISEAPPQSFTPSA) show a composition bias toward polar residues. The interval 67-151 (SPPQTVISEA…DEKVLADGPF (85 aa)) is disordered. Over residues 86 to 98 (TNSTSDKTSSSLK) the composition is skewed to low complexity. Over residues 106 to 123 (SDGDLDMEGEEDTEELFD) the composition is skewed to acidic residues. Residues 124-133 (NESQPSQRNQ) are compositionally biased toward polar residues. The span at 134-146 (SPKETEVEDEKVL) shows a compositional bias: basic and acidic residues.

Multimer. May interact with mediator complex subunit mdt-29. Widely expressed, including in pharyngeal muscle cells and body wall muscle cells.

It is found in the nucleus. Functionally, putative transcription factor. Positive regulator of the lin-12/Notch signaling pathway. Binds to specific DNA sequences in regulatory elements. Involved in cell fate decisions that require cell-cell interactions, such as the anchor cell (AC) / ventral uterine (VU) precursor cell fate decision. Heterochronic protein which controls the choice of stage specific cell fates, including the larval L3 stage-specific fate of seam cells. Involved in regulating the temporal expression pattern of hunchback-like protein hbl-1, thereby playing a role in the progression between larval stages L2 and L3. The protein is Putative transcription factor sel-7 of Caenorhabditis elegans.